Reading from the N-terminus, the 276-residue chain is Large ribosomal subunit protein uL2c (276 aa).

The interval 225-276 (AMNPVDHPHGGGEGRTPIGRKKPVTPWGYSALGKKSRKRNRYSDASILRRRE) is disordered.

This sequence belongs to the universal ribosomal protein uL2 family. In terms of assembly, part of the 50S ribosomal subunit.

The protein localises to the plastid. The protein resides in the chloroplast. This Pinus koraiensis (Korean pine) protein is Large ribosomal subunit protein uL2c (rpl2).